We begin with the raw amino-acid sequence, 305 residues long: Porphobilinogen deaminase (305 aa).

Cys243 is subject to S-(dipyrrolylmethanemethyl)cysteine.

It belongs to the HMBS family. Monomer. The cofactor is dipyrromethane.

It catalyses the reaction 4 porphobilinogen + H2O = hydroxymethylbilane + 4 NH4(+). Its pathway is porphyrin-containing compound metabolism; protoporphyrin-IX biosynthesis; coproporphyrinogen-III from 5-aminolevulinate: step 2/4. Tetrapolymerization of the monopyrrole PBG into the hydroxymethylbilane pre-uroporphyrinogen in several discrete steps. The protein is Porphobilinogen deaminase of Limosilactobacillus reuteri (strain DSM 20016) (Lactobacillus reuteri).